A 211-amino-acid polypeptide reads, in one-letter code: MNSNVENLPPHIIRQVYKEVSTLTSDPPEGIKIIPNEEDITDVQVNIEGPEGTPYAGGIFRMKLILGKDFPAAPPKGYFLTKIFHPNVSTNGEICVNVLKKDWKAELGIRHVLLTIKCLLIHPNPESALNEEAGRLLLENYEEYASRARLMTEIHAQGSSLRGKDPTDPCSSASATLVSGDGPMAKKHAGDRDKKLAAKKKTDKKRALRRL.

Residues 11–157 (HIIRQVYKEV…ARLMTEIHAQ (147 aa)) form the UBC core domain. The active-site Glycyl thioester intermediate is the Cys95. The segment at 157–211 (QGSSLRGKDPTDPCSSASATLVSGDGPMAKKHAGDRDKKLAAKKKTDKKRALRRL) is disordered. Residues 197–211 (AAKKKTDKKRALRRL) show a composition bias toward basic residues.

This sequence belongs to the ubiquitin-conjugating enzyme family.

The catalysed reaction is S-ubiquitinyl-[E1 ubiquitin-activating enzyme]-L-cysteine + [E2 ubiquitin-conjugating enzyme]-L-cysteine = [E1 ubiquitin-activating enzyme]-L-cysteine + S-ubiquitinyl-[E2 ubiquitin-conjugating enzyme]-L-cysteine.. The protein operates within protein modification; protein ubiquitination. Functionally, catalyzes the covalent attachment of ubiquitin to other proteins. Acts as an essential factor of the anaphase promoting complex/cyclosome (APC/C), a cell cycle-regulated ubiquitin ligase that controls progression through mitosis. Acts by specifically elongating 'Lys-11'-linked polyubiquitin chains initiated by the E2 enzyme ube2c/ubch10 on APC/C substrates, enhancing the degradation of APC/C substrates by the proteasome and promoting mitotic exit. This chain is Ubiquitin-conjugating enzyme E2 S (ube2s), found in Xenopus tropicalis (Western clawed frog).